A 229-amino-acid chain; its full sequence is MIRAIVTDIEGTTSDIRFVHNVLFPYARERLAAFVTARQYAEPVKSILDNLRNEIARPDASTAELIETLFTFMDEDRKSTALKALQGIIWHDGYVNGDFTGHLYPDVLPALEKWKAQGIDLYVYSSGSVAAQKLLFGYSDEGDITHLFSGYFDTHIGAKRETQSYRNIASYIGVAPSQILFLSDVYQELDAAEEAGLRTLQLIRGEGDGASRHHQVHQFDDINPEQILS.

It belongs to the HAD-like hydrolase superfamily. MasA/MtnC family. As to quaternary structure, monomer. Mg(2+) is required as a cofactor.

The catalysed reaction is 5-methylsulfanyl-2,3-dioxopentyl phosphate + H2O = 1,2-dihydroxy-5-(methylsulfanyl)pent-1-en-3-one + phosphate. The protein operates within amino-acid biosynthesis; L-methionine biosynthesis via salvage pathway; L-methionine from S-methyl-5-thio-alpha-D-ribose 1-phosphate: step 3/6. It functions in the pathway amino-acid biosynthesis; L-methionine biosynthesis via salvage pathway; L-methionine from S-methyl-5-thio-alpha-D-ribose 1-phosphate: step 4/6. Bifunctional enzyme that catalyzes the enolization of 2,3-diketo-5-methylthiopentyl-1-phosphate (DK-MTP-1-P) into the intermediate 2-hydroxy-3-keto-5-methylthiopentenyl-1-phosphate (HK-MTPenyl-1-P), which is then dephosphorylated to form the acireductone 1,2-dihydroxy-3-keto-5-methylthiopentene (DHK-MTPene). The sequence is that of Enolase-phosphatase E1 from Citrobacter koseri (strain ATCC BAA-895 / CDC 4225-83 / SGSC4696).